Reading from the N-terminus, the 440-residue chain is Tetratricopeptide repeat protein 5 (440 aa).

TPR repeat units lie at residues 7–61 (EEVK…EEVV), 68–98 (AQVL…AVKL), 103–130 (VEAW…SGAL), 136–174 (KVSL…AVQM), and 179–216 (GRSW…AEKV). The Nuclear export signal signature appears at 13–24 (LQKLQELVDQLY). Serine 203 bears the Phosphoserine; by ATM mark. Serine 221 carries the phosphoserine; by CHEK2 modification. A TPR 6 repeat occupies 224–253 (PDLHLNRATLHKYEESYGEALEGFSRAAAL). Residues 285-287 (KTK) are mediates interaction with 28S rRNA of ribosome-coding tubulin.

In terms of assembly, interacts with JMY and p300/EP300; the interaction occurs in the nucleus and augments the association between JMY and p300/EP300 in response to DNA damage. Forms a complex with HSF1 and p300/EP300; these interactions augment chromatin-bound HSF1 and p300/EP300 histone acetyltransferase activity, resulting in enhanced heat-shock-responsive transcription. Interacts with PRMT5; the interaction is DNA damage-dependent and promotes PRMT5 interaction with p53/TP53 and subsequent methylation. Interacts with JMY; the interaction occurs in the cytoplasm and results in the inhibition of JYM's nucleation activity. Interacts with ribosome-coding tubulin (via 60S subunit 28S rRNA and protein uL24/RPL26) and the N-terminal of nascent tubulin polypeptide (via alpha-tubulin MREC motif and beta-tubulin MREI motif); these interactions result in tubulin mRNA-targeted degradation. Interacts with ATP5F1B; the interaction occurs in the mitochondria and results in ATP production decrease. Interacts with p53/TP53; the interaction occurs in the mitochondria and results in increased apoptosis. In terms of processing, phosphorylation by ATM kinase induces nuclear accumulation while interfering with nuclear export, and phosphorylation by CHEK2 kinase enhances nuclear stability.

It is found in the nucleus. Its subcellular location is the cytoplasm. The protein resides in the cytoplasmic vesicle. It localises to the mitochondrion matrix. Cofactor involved in the regulation of various cellular mechanisms such as actin regulation, autophagy, chromatin regulation and DNA repair. In non-stress conditions, interacts with cofactor JMY in the cytoplasm which prevents JMY's actin nucleation activity and ability to activate the Arp2/3 complex. Acts as a negative regulator of nutrient stress-induced autophagy by preventing JMY's interaction with MAP1LC3B, thereby preventing autophagosome formation. Involves in tubulin autoregulation by promoting its degradation in response to excess soluble tubulin. To do so, associates with the active ribosome near the ribosome exit tunnel and with nascent tubulin polypeptides early during their translation, triggering tubulin mRNA-targeted degradation. Following DNA damage, phosphorylated by DNA damage responsive protein kinases ATM and CHEK2, leading to its nuclear accumulation and stability. Nuclear TTC5/STRAP promotes the assembly of a stress-responsive p53/TP53 coactivator complex, which includes the coactivators JMY and p300, thereby increasing p53/TP53-dependent transcription and apoptosis. Also recruits arginine methyltransferase PRMT5 to p53/TP53 when DNA is damaged, allowing PRMT5 to methylate p53/TP53. In DNA stress conditions, also prevents p53/TP53 degradation by E3 ubiquitin ligase MDM2. Upon heat-shock stress, forms a chromatin-associated complex with heat-shock factor 1 HSF1 and p300/EP300 to stimulate heat-shock-responsive transcription, thereby increasing cell survival. Mitochondrial TTC5/STRAP interacts with ATP synthase subunit beta ATP5F1B which decreased ATP synthase activity and lowers mitochondrial ATP production, thereby regulating cellular respiration and mitochondrial-dependent apoptosis. Mitochondrial TTC5/STRAP also regulates p53/TP53-mediated apoptosis. The sequence is that of Tetratricopeptide repeat protein 5 from Homo sapiens (Human).